The following is a 364-amino-acid chain: Coproporphyrin III ferrochelatase (364 aa).

Positions 29 and 118 each coordinate Fe-coproporphyrin III. 2 residues coordinate Fe(2+): His-169 and Glu-250.

Belongs to the ferrochelatase family.

It localises to the cytoplasm. It catalyses the reaction Fe-coproporphyrin III + 2 H(+) = coproporphyrin III + Fe(2+). The protein operates within porphyrin-containing compound metabolism; protoheme biosynthesis. Its function is as follows. Involved in coproporphyrin-dependent heme b biosynthesis. Catalyzes the insertion of ferrous iron into coproporphyrin III to form Fe-coproporphyrin III. In Streptococcus pneumoniae (strain 70585), this protein is Coproporphyrin III ferrochelatase.